Here is a 60-residue protein sequence, read N- to C-terminus: Short neurotoxin 1 (60 aa).

4 cysteine pairs are disulfide-bonded: Cys3-Cys22, Cys17-Cys39, Cys41-Cys52, and Cys53-Cys58.

It belongs to the three-finger toxin family. Short-chain subfamily. Type I alpha-neurotoxin sub-subfamily. In terms of tissue distribution, expressed by the venom gland.

The protein resides in the secreted. In terms of biological role, binds to muscle nicotinic acetylcholine receptor (nAChR) and inhibit acetylcholine from binding to the receptor, thereby impairing neuromuscular transmission. The protein is Short neurotoxin 1 of Hydrophis schistosus (Beaked sea snake).